A 180-amino-acid polypeptide reads, in one-letter code: UPF0690 protein C1orf52 homolog (180 aa).

Disordered stretches follow at residues 1–66 (MAAE…SVTR) and 96–180 (KIWK…KKKK). The segment covering 48 to 61 (KQAEKRLPGPDELF) has biased composition (basic and acidic residues). Position 65 is a phosphothreonine (Thr65). Position 130 is a phosphotyrosine (Tyr130). Over residues 149–160 (EGEETVESDDDK) the composition is skewed to acidic residues. The residue at position 156 (Ser156) is a Phosphoserine. The segment covering 161-180 (DERASKIRRVEPGEAAKKKK) has biased composition (basic and acidic residues).

This sequence belongs to the UPF0690 family.

The polypeptide is UPF0690 protein C1orf52 homolog (Mus musculus (Mouse)).